The sequence spans 581 residues: Sabinene synthase 1, chloroplastic (581 aa).

A chloroplast-targeting transit peptide spans 1-28 (MPLNSLHNLERKPSKAWSTSCTAPAARL). Positions 297, 334, 338, 475, and 478 each coordinate (2E)-geranyl diphosphate. Mg(2+)-binding residues include Asp-334 and Asp-338. The short motif at 334–338 (DDVYD) is the DDXXD motif element. Mg(2+) is bound by residues Asp-478, Thr-482, and Glu-486.

The protein belongs to the terpene synthase family. Tpsb subfamily. It depends on Mg(2+) as a cofactor. Requires Mn(2+) as cofactor.

The protein localises to the plastid. The protein resides in the chloroplast. The enzyme catalyses (2E)-geranyl diphosphate = sabinene + diphosphate. The catalysed reaction is (2E)-geranyl diphosphate = beta-myrcene + diphosphate. Its pathway is secondary metabolite biosynthesis; terpenoid biosynthesis. In terms of biological role, monoterpene synthase (TPS) involved in the biosynthesis of monoterpene natural products, components of the chemical defense arsenal. Catalyzes the conversion of (2E)-geranyl diphosphate (GPP) into sabinene, and, as minor products, myrcene. The sequence is that of Sabinene synthase 1, chloroplastic from Salvia pomifera (Apple sage).